A 940-amino-acid polypeptide reads, in one-letter code: UvrABC system protein A (940 aa).

Position 33–40 (33–40) interacts with ATP; it reads GVSGSGKS. The C4-type zinc finger occupies 252–279; the sequence is CPVCGFTVPELEPRLFSFNAPFGSCPDC. 2 ABC transporter domains span residues 309–586 and 606–935; these read WYGK…KKSL and IDKK…QYLK. Residue 639–646 coordinates ATP; the sequence is GVSGSGKS. The segment at 738–764 adopts a C4-type zinc-finger fold; that stretch reads CEACSGDGIIKIEMHFLPDVYVPCEVC.

Belongs to the ABC transporter superfamily. UvrA family. Forms a heterotetramer with UvrB during the search for lesions.

Its subcellular location is the cytoplasm. Functionally, the UvrABC repair system catalyzes the recognition and processing of DNA lesions. UvrA is an ATPase and a DNA-binding protein. A damage recognition complex composed of 2 UvrA and 2 UvrB subunits scans DNA for abnormalities. When the presence of a lesion has been verified by UvrB, the UvrA molecules dissociate. The chain is UvrABC system protein A from Lactococcus lactis subsp. lactis (strain IL1403) (Streptococcus lactis).